Reading from the N-terminus, the 525-residue chain is Phosphoenolpyruvate carboxykinase (ATP) (525 aa).

Substrate-binding residues include Arg54, Tyr190, and Lys196. Residues Lys196, His215, and 231-239 (GLSGTGKTT) each bind ATP. Residues Lys196 and His215 each contribute to the Mn(2+) site. A Mn(2+)-binding site is contributed by Asp252. ATP contacts are provided by Glu280, Arg316, and Thr441. Arg316 lines the substrate pocket.

This sequence belongs to the phosphoenolpyruvate carboxykinase (ATP) family. Mn(2+) serves as cofactor.

The protein localises to the cytoplasm. It carries out the reaction oxaloacetate + ATP = phosphoenolpyruvate + ADP + CO2. The protein operates within carbohydrate biosynthesis; gluconeogenesis. In terms of biological role, involved in the gluconeogenesis. Catalyzes the conversion of oxaloacetate (OAA) to phosphoenolpyruvate (PEP) through direct phosphoryl transfer between the nucleoside triphosphate and OAA. This is Phosphoenolpyruvate carboxykinase (ATP) from Nitratiruptor sp. (strain SB155-2).